Consider the following 2328-residue polypeptide: Reducing polyketide synthase Preu2 (2328 aa).

The 259-residue stretch at 1 to 259 (MMAVHLAVAS…GSNVHVIVES (259 aa)) folds into the Ketosynthase family 3 (KS3) domain. Residues 376–696 (IFTGQGAQWP…SGLLKRSSNS (321 aa)) are malonyl-CoA:ACP transacylase (MAT) domain. An N-terminal hotdog fold region spans residues 766–899 (NELLGEELSM…GSLTVQFGDD (134 aa)). The dehydratase (DH) domain stretch occupies residues 766-1057 (NELLGEELSM…FCTAPFRMST (292 aa)). The PKS/mFAS DH domain occupies 766–1059 (NELLGEELSM…TAPFRMSTPE (294 aa)). The active-site Proton acceptor; for dehydratase activity is the His798. The segment at 914 to 1059 (LTELDLDTFY…TAPFRMSTPE (146 aa)) is C-terminal hotdog fold. Asp969 serves as the catalytic Proton donor; for dehydratase activity. Residues 1198 to 1419 (DGMLTQLYSE…VDERVVSLRD (222 aa)) are methyltransferase (MT) domain. Residues 1932–2111 (CYIIIGTSDL…AASVVHLGHV (180 aa)) are ketoreductase (KR)domain. The 79-residue stretch at 2231–2309 (SSSHDIIRNG…NIVDFAVAHL (79 aa)) folds into the Carrier domain. An O-(pantetheine 4'-phosphoryl)serine modification is found at Ser2269.

Pantetheine 4'-phosphate serves as cofactor.

Reducing polyketide synthase; part of a gene cluster that mediates the biosynthesis of a yet unidentified natural product. In Preussia isomera (Coprophilous fungus), this protein is Reducing polyketide synthase Preu2.